A 194-amino-acid chain; its full sequence is ATP-dependent Clp protease proteolytic subunit (194 aa).

The active-site Nucleophile is the S97. H122 is a catalytic residue.

This sequence belongs to the peptidase S14 family. As to quaternary structure, fourteen ClpP subunits assemble into 2 heptameric rings which stack back to back to give a disk-like structure with a central cavity, resembling the structure of eukaryotic proteasomes.

Its subcellular location is the cytoplasm. It carries out the reaction Hydrolysis of proteins to small peptides in the presence of ATP and magnesium. alpha-casein is the usual test substrate. In the absence of ATP, only oligopeptides shorter than five residues are hydrolyzed (such as succinyl-Leu-Tyr-|-NHMec, and Leu-Tyr-Leu-|-Tyr-Trp, in which cleavage of the -Tyr-|-Leu- and -Tyr-|-Trp bonds also occurs).. In terms of biological role, cleaves peptides in various proteins in a process that requires ATP hydrolysis. Has a chymotrypsin-like activity. Plays a major role in the degradation of misfolded proteins. This Campylobacter jejuni subsp. jejuni serotype O:6 (strain 81116 / NCTC 11828) protein is ATP-dependent Clp protease proteolytic subunit.